A 77-amino-acid polypeptide reads, in one-letter code: Major outer membrane lipoprotein Lpp (77 aa).

Residues 1 to 19 form the signal peptide; sequence MNRTKLVLGAVILGSHSAG. Residue C20 is the site of N-palmitoyl cysteine attachment. C20 is lipidated: S-diacylglycerol cysteine. 2 repeats span residues 23–33 and 37–47; these read NAKIDQLSSDV and NAKVDQLSNDV. A coiled-coil region spans residues 26–74; the sequence is IDQLSSDVQTLNAKVDQLSNDVNAMRSDVQAAKDDAARANQRLDNQAHA. The interval 56 to 77 is disordered; the sequence is AAKDDAARANQRLDNQAHAYKK. N6-murein peptidoglycan lysine is present on K77.

The protein belongs to the Lpp family. Homotrimer.

Its subcellular location is the cell outer membrane. The protein localises to the secreted. It is found in the cell wall. A highly abundant outer membrane lipoprotein that controls the distance between the inner and outer membranes. The only protein known to be covalently linked to the peptidoglycan network (PGN). Also non-covalently binds the PGN. The link between the cell outer membrane and PGN contributes to maintenance of the structural and functional integrity of the cell envelope, and maintains the correct distance between the PGN and the outer membrane. In Serratia marcescens, this protein is Major outer membrane lipoprotein Lpp.